We begin with the raw amino-acid sequence, 587 residues long: Aspartate--tRNA ligase (587 aa).

Glutamate 173 is a binding site for L-aspartate. The aspartate stretch occupies residues 197–200 (QTLK). Arginine 219 lines the L-aspartate pocket. ATP contacts are provided by residues 219–221 (RDE) and glutamine 228. Histidine 446 contacts L-aspartate. Glutamate 480 lines the ATP pocket. Arginine 487 contacts L-aspartate. Residue 532 to 535 (GLDR) coordinates ATP.

It belongs to the class-II aminoacyl-tRNA synthetase family. Type 1 subfamily. As to quaternary structure, homodimer.

The protein resides in the cytoplasm. It carries out the reaction tRNA(Asp) + L-aspartate + ATP = L-aspartyl-tRNA(Asp) + AMP + diphosphate. In terms of biological role, catalyzes the attachment of L-aspartate to tRNA(Asp) in a two-step reaction: L-aspartate is first activated by ATP to form Asp-AMP and then transferred to the acceptor end of tRNA(Asp). The protein is Aspartate--tRNA ligase of Phocaeicola vulgatus (strain ATCC 8482 / DSM 1447 / JCM 5826 / CCUG 4940 / NBRC 14291 / NCTC 11154) (Bacteroides vulgatus).